Reading from the N-terminus, the 300-residue chain is Ribosomal protein L11 methyltransferase (300 aa).

Positions 152, 173, 195, and 234 each coordinate S-adenosyl-L-methionine.

The protein belongs to the methyltransferase superfamily. PrmA family.

It localises to the cytoplasm. The enzyme catalyses L-lysyl-[protein] + 3 S-adenosyl-L-methionine = N(6),N(6),N(6)-trimethyl-L-lysyl-[protein] + 3 S-adenosyl-L-homocysteine + 3 H(+). In terms of biological role, methylates ribosomal protein L11. This chain is Ribosomal protein L11 methyltransferase, found in Burkholderia multivorans (strain ATCC 17616 / 249).